The sequence spans 397 residues: Elongation factor Tu (397 aa).

Positions 10 to 206 constitute a tr-type G domain; the sequence is KPHVNIGTIG…AVDEAIPTPP (197 aa). Positions 19 to 26 are G1; the sequence is GHIDHGKT. 19-26 serves as a coordination point for GTP; that stretch reads GHIDHGKT. Thr-26 contributes to the Mg(2+) binding site. The interval 62 to 66 is G2; it reads GITIS. Residues 83–86 are G3; that stretch reads DCPG. Residues 83–87 and 138–141 each bind GTP; these read DCPGH and NKAD. Positions 138–141 are G4; the sequence is NKAD. Residues 176 to 178 form a G5 region; that stretch reads SAL.

Belongs to the TRAFAC class translation factor GTPase superfamily. Classic translation factor GTPase family. EF-Tu/EF-1A subfamily. In terms of assembly, monomer.

It is found in the cytoplasm. The enzyme catalyses GTP + H2O = GDP + phosphate + H(+). Its function is as follows. GTP hydrolase that promotes the GTP-dependent binding of aminoacyl-tRNA to the A-site of ribosomes during protein biosynthesis. The protein is Elongation factor Tu of Kitasatospora aureofaciens (Streptomyces aureofaciens).